The primary structure comprises 156 residues: 6,7-dimethyl-8-ribityllumazine synthase (156 aa).

5-amino-6-(D-ribitylamino)uracil contacts are provided by residues Phe-23, Ser-57 to Glu-59, and Ala-81 to Val-83. Glu-86–Thr-87 serves as a coordination point for (2S)-2-hydroxy-3-oxobutyl phosphate. His-89 serves as the catalytic Proton donor. Phe-114 contributes to the 5-amino-6-(D-ribitylamino)uracil binding site. Arg-128 is a binding site for (2S)-2-hydroxy-3-oxobutyl phosphate.

Belongs to the DMRL synthase family.

It catalyses the reaction (2S)-2-hydroxy-3-oxobutyl phosphate + 5-amino-6-(D-ribitylamino)uracil = 6,7-dimethyl-8-(1-D-ribityl)lumazine + phosphate + 2 H2O + H(+). The protein operates within cofactor biosynthesis; riboflavin biosynthesis; riboflavin from 2-hydroxy-3-oxobutyl phosphate and 5-amino-6-(D-ribitylamino)uracil: step 1/2. Catalyzes the formation of 6,7-dimethyl-8-ribityllumazine by condensation of 5-amino-6-(D-ribitylamino)uracil with 3,4-dihydroxy-2-butanone 4-phosphate. This is the penultimate step in the biosynthesis of riboflavin. The chain is 6,7-dimethyl-8-ribityllumazine synthase from Salinibacter ruber (strain DSM 13855 / M31).